We begin with the raw amino-acid sequence, 384 residues long: Chaperone protein DnaJ 1 (384 aa).

In terms of domain architecture, J spans 4 to 68 (DYYGLLGVAR…EKRRIVDMGG (65 aa)). The segment at 133–215 (GVTKHLTVDT…CGGDGRVRAR (83 aa)) adopts a CR-type zinc-finger fold. Residues Cys146, Cys149, Cys163, Cys166, Cys189, Cys192, Cys203, and Cys206 each contribute to the Zn(2+) site. CXXCXGXG motif repeat units lie at residues 146–153 (CDACHGSG), 163–170 (CETCGGAG), 189–196 (CPTCRGAG), and 203–210 (CHKCGGDG).

This sequence belongs to the DnaJ family. In terms of assembly, homodimer. Zn(2+) is required as a cofactor.

Its subcellular location is the cytoplasm. Functionally, participates actively in the response to hyperosmotic and heat shock by preventing the aggregation of stress-denatured proteins and by disaggregating proteins, also in an autonomous, DnaK-independent fashion. Unfolded proteins bind initially to DnaJ; upon interaction with the DnaJ-bound protein, DnaK hydrolyzes its bound ATP, resulting in the formation of a stable complex. GrpE releases ADP from DnaK; ATP binding to DnaK triggers the release of the substrate protein, thus completing the reaction cycle. Several rounds of ATP-dependent interactions between DnaJ, DnaK and GrpE are required for fully efficient folding. Also involved, together with DnaK and GrpE, in the DNA replication of plasmids through activation of initiation proteins. This chain is Chaperone protein DnaJ 1, found in Nocardia farcinica (strain IFM 10152).